Consider the following 545-residue polypeptide: ATP synthase subunit alpha (545 aa).

173–180 (GDRQTGKT) lines the ATP pocket.

It belongs to the ATPase alpha/beta chains family. As to quaternary structure, F-type ATPases have 2 components, CF(1) - the catalytic core - and CF(0) - the membrane proton channel. CF(1) has five subunits: alpha(3), beta(3), gamma(1), delta(1), epsilon(1). CF(0) has three main subunits: a(1), b(2) and c(9-12). The alpha and beta chains form an alternating ring which encloses part of the gamma chain. CF(1) is attached to CF(0) by a central stalk formed by the gamma and epsilon chains, while a peripheral stalk is formed by the delta and b chains.

The protein resides in the cell membrane. The enzyme catalyses ATP + H2O + 4 H(+)(in) = ADP + phosphate + 5 H(+)(out). In terms of biological role, produces ATP from ADP in the presence of a proton gradient across the membrane. The alpha chain is a regulatory subunit. In Paenarthrobacter aurescens (strain TC1), this protein is ATP synthase subunit alpha.